A 559-amino-acid chain; its full sequence is Dihydroxy-acid dehydratase (559 aa).

Residue Cys52 coordinates [2Fe-2S] cluster. Mg(2+) is bound at residue Asp84. Cys125 contributes to the [2Fe-2S] cluster binding site. Mg(2+)-binding residues include Asp126 and Lys127. The residue at position 127 (Lys127) is an N6-carboxylysine. Cys197 serves as a coordination point for [2Fe-2S] cluster. Glu447 provides a ligand contact to Mg(2+). The active-site Proton acceptor is the Ser473.

This sequence belongs to the IlvD/Edd family. In terms of assembly, homodimer. [2Fe-2S] cluster serves as cofactor. Mg(2+) is required as a cofactor.

The enzyme catalyses (2R)-2,3-dihydroxy-3-methylbutanoate = 3-methyl-2-oxobutanoate + H2O. The catalysed reaction is (2R,3R)-2,3-dihydroxy-3-methylpentanoate = (S)-3-methyl-2-oxopentanoate + H2O. It participates in amino-acid biosynthesis; L-isoleucine biosynthesis; L-isoleucine from 2-oxobutanoate: step 3/4. The protein operates within amino-acid biosynthesis; L-valine biosynthesis; L-valine from pyruvate: step 3/4. In terms of biological role, functions in the biosynthesis of branched-chain amino acids. Catalyzes the dehydration of (2R,3R)-2,3-dihydroxy-3-methylpentanoate (2,3-dihydroxy-3-methylvalerate) into 2-oxo-3-methylpentanoate (2-oxo-3-methylvalerate) and of (2R)-2,3-dihydroxy-3-methylbutanoate (2,3-dihydroxyisovalerate) into 2-oxo-3-methylbutanoate (2-oxoisovalerate), the penultimate precursor to L-isoleucine and L-valine, respectively. The protein is Dihydroxy-acid dehydratase of Roseiflexus castenholzii (strain DSM 13941 / HLO8).